The sequence spans 453 residues: Ribosomal protein uS12 methylthiotransferase RimO (453 aa).

The MTTase N-terminal domain maps to 6–116; that stretch reads PTVGIVSLGC…VLTAVHEAIA (111 aa). [4Fe-4S] cluster contacts are provided by Cys15, Cys51, Cys80, Cys148, Cys152, and Cys155. The Radical SAM core domain maps to 134 to 371; sequence LTPKHFAYLK…MQLQQQISAN (238 aa). Residues 374 to 440 enclose the TRAM domain; sequence QAKIGKTIQV…EYDLWATPVG (67 aa).

It belongs to the methylthiotransferase family. RimO subfamily. [4Fe-4S] cluster serves as cofactor.

It is found in the cytoplasm. The catalysed reaction is L-aspartate(89)-[ribosomal protein uS12]-hydrogen + (sulfur carrier)-SH + AH2 + 2 S-adenosyl-L-methionine = 3-methylsulfanyl-L-aspartate(89)-[ribosomal protein uS12]-hydrogen + (sulfur carrier)-H + 5'-deoxyadenosine + L-methionine + A + S-adenosyl-L-homocysteine + 2 H(+). Functionally, catalyzes the methylthiolation of an aspartic acid residue of ribosomal protein uS12. The polypeptide is Ribosomal protein uS12 methylthiotransferase RimO (Hydrogenovibrio crunogenus (strain DSM 25203 / XCL-2) (Thiomicrospira crunogena)).